The chain runs to 196 residues: DnaA initiator-associating protein DiaA (196 aa).

The SIS domain maps to 34–196 (LVQSLLNGNK…DNTLFPHQDD (163 aa)).

The protein belongs to the SIS family. DiaA subfamily. As to quaternary structure, homotetramer; dimer of dimers.

In terms of biological role, required for the timely initiation of chromosomal replication via direct interactions with the DnaA initiator protein. The polypeptide is DnaA initiator-associating protein DiaA (Cronobacter sakazakii (strain ATCC BAA-894) (Enterobacter sakazakii)).